Here is a 61-residue protein sequence, read N- to C-terminus: Large ribosomal subunit protein uL30 (61 aa).

The protein belongs to the universal ribosomal protein uL30 family. Part of the 50S ribosomal subunit.

The sequence is that of Large ribosomal subunit protein uL30 from Shewanella piezotolerans (strain WP3 / JCM 13877).